The chain runs to 356 residues: Riboflavin biosynthesis protein RibD (356 aa).

The segment at 1–148 (MIREIDKNYM…EDFFTYITQE (148 aa)) is deaminase. The region spanning 4–126 (EIDKNYMKLA…KLRNAGIEVD (123 aa)) is the CMP/dCMP-type deaminase domain. Histidine 53 contributes to the Zn(2+) binding site. Glutamate 55 functions as the Proton donor in the catalytic mechanism. Zn(2+) is bound by residues cysteine 78 and cysteine 87. The tract at residues 149–356 (RPYITLKWAQ…EDLVIFFKRY (208 aa)) is reductase. Alanine 157 contributes to the NADP(+) binding site. A substrate-binding site is contributed by serine 171. NADP(+) is bound at residue tryptophan 173. Substrate is bound at residue arginine 187. Residues threonine 199 and aspartate 203 each contribute to the NADP(+) site. Leucine 207, arginine 210, and glutamate 290 together coordinate substrate. 292–298 (GPRTLTS) provides a ligand contact to NADP(+).

In the N-terminal section; belongs to the cytidine and deoxycytidylate deaminase family. This sequence in the C-terminal section; belongs to the HTP reductase family. Zn(2+) is required as a cofactor.

It catalyses the reaction 2,5-diamino-6-hydroxy-4-(5-phosphoribosylamino)-pyrimidine + H2O + H(+) = 5-amino-6-(5-phospho-D-ribosylamino)uracil + NH4(+). The catalysed reaction is 5-amino-6-(5-phospho-D-ribitylamino)uracil + NADP(+) = 5-amino-6-(5-phospho-D-ribosylamino)uracil + NADPH + H(+). It functions in the pathway cofactor biosynthesis; riboflavin biosynthesis; 5-amino-6-(D-ribitylamino)uracil from GTP: step 2/4. The protein operates within cofactor biosynthesis; riboflavin biosynthesis; 5-amino-6-(D-ribitylamino)uracil from GTP: step 3/4. Converts 2,5-diamino-6-(ribosylamino)-4(3h)-pyrimidinone 5'-phosphate into 5-amino-6-(ribosylamino)-2,4(1h,3h)-pyrimidinedione 5'-phosphate. This Aquifex aeolicus (strain VF5) protein is Riboflavin biosynthesis protein RibD (ribD).